The primary structure comprises 84 residues: Putative protein BCE-1 (84 aa).

This is Putative protein BCE-1 (BCE1) from Homo sapiens (Human).